The chain runs to 155 residues: Protein-export protein SecB (155 aa).

The protein belongs to the SecB family. As to quaternary structure, homotetramer, a dimer of dimers. One homotetramer interacts with 1 SecA dimer.

It localises to the cytoplasm. Functionally, one of the proteins required for the normal export of preproteins out of the cell cytoplasm. It is a molecular chaperone that binds to a subset of precursor proteins, maintaining them in a translocation-competent state. It also specifically binds to its receptor SecA. This Albidiferax ferrireducens (strain ATCC BAA-621 / DSM 15236 / T118) (Rhodoferax ferrireducens) protein is Protein-export protein SecB.